A 102-amino-acid chain; its full sequence is Antimicrobial peptide 1 (102 aa).

The N-terminal stretch at 1–26 (MASTKLFFSVITVMMLIAMASEMVNG) is a signal peptide. Cystine bridges form between Cys-37-Cys-90, Cys-47-Cys-102, and Cys-49-Cys-75.

The protein resides in the secreted. Antimicrobial peptide which inhibits the growth of a variety of fungi, oomycetes, Gram-positive bacterial phytopatogenes and S.cerevisiae in vitro. No activity against E.coli. In Macadamia integrifolia (Macadamia nut), this protein is Antimicrobial peptide 1.